Consider the following 180-residue polypeptide: Large ribosomal subunit protein uL5 (180 aa).

Belongs to the universal ribosomal protein uL5 family. In terms of assembly, part of the 50S ribosomal subunit; part of the 5S rRNA/L5/L18/L25 subcomplex. Contacts the 5S rRNA and the P site tRNA. Forms a bridge to the 30S subunit in the 70S ribosome.

This is one of the proteins that bind and probably mediate the attachment of the 5S RNA into the large ribosomal subunit, where it forms part of the central protuberance. In the 70S ribosome it contacts protein S13 of the 30S subunit (bridge B1b), connecting the 2 subunits; this bridge is implicated in subunit movement. Contacts the P site tRNA; the 5S rRNA and some of its associated proteins might help stabilize positioning of ribosome-bound tRNAs. This chain is Large ribosomal subunit protein uL5, found in Xanthomonas euvesicatoria pv. vesicatoria (strain 85-10) (Xanthomonas campestris pv. vesicatoria).